The following is a 133-amino-acid chain: Small ribosomal subunit protein uS8 (133 aa).

It belongs to the universal ribosomal protein uS8 family. As to quaternary structure, part of the 30S ribosomal subunit.

Functionally, one of the primary rRNA binding proteins, it binds directly to 16S rRNA central domain where it helps coordinate assembly of the platform of the 30S subunit. This is Small ribosomal subunit protein uS8 from Desulfurococcus amylolyticus (strain DSM 18924 / JCM 16383 / VKM B-2413 / 1221n) (Desulfurococcus kamchatkensis).